Here is a 319-residue protein sequence, read N- to C-terminus: Protein SODIUM POTASSIUM ROOT DEFECTIVE 1 (319 aa).

A compositionally biased stretch (polar residues) spans 1 to 13 (MLCASQASTTTLC). Disordered regions lie at residues 1 to 113 (MLCA…TPQG) and 191 to 248 (SPDN…NSSS). Residues 14-27 (STMDQTSQPSSSSS) show a composition bias toward low complexity. The segment covering 36–49 (AIDRHNPIIRDGRR) has biased composition (basic and acidic residues). The segment covering 58 to 67 (LNPSSSSSST) has biased composition (low complexity). 2 stretches are compositionally biased toward polar residues: residues 104-113 (SCFSSDTPQG) and 200-210 (TKASPTASLSS). Residues 224–242 (SPPPPPPPSPPQSSPPSPP) are compositionally biased toward pro residues. Residues 249–315 (DQVVVLRVSL…KVKNAQFWPE (67 aa)) form the HMA domain. Zn(2+)-binding residues include Cys-260 and Cys-263.

As to quaternary structure, interacts with FT, but not with TSF (TWIN SISTER OF FT). As to expression, expressed in vascular tissues of cotyledons, rosette leaves and roots in developing seedlings before and during the floral transition. Expressed specifically in the phloem companion cells. Not detected in embryos or seeds. Not detected in the vegetative shoot apex.

Its subcellular location is the cytoplasm. The protein resides in the nucleus. It localises to the endoplasmic reticulum. Functionally, required for root meristem maintenance after germination. Involved in phloem translocation, starch accumulation and flowering. Promotes flowering in the photoperiod pathway. Regulates long-distance movement of FT from leaves to the shoot apex through the phloem stream. The sequence is that of Protein SODIUM POTASSIUM ROOT DEFECTIVE 1 from Arabidopsis thaliana (Mouse-ear cress).